Reading from the N-terminus, the 420-residue chain is Peroxisomal biogenesis factor 3 (420 aa).

Residues 1–16 are Peroxisomal-facing; the sequence is MPIFSSLNSFLRRHKK. Residues 17 to 37 form a helical membrane-spanning segment; it reads KLIVTATLTFSAYFLVNQFII. Topologically, residues 38-420 are cytoplasmic; it reads KKLKNFQNSL…FSASIYSNFE (383 aa).

Belongs to the peroxin-3 family.

The protein localises to the peroxisome membrane. Its function is as follows. Involved in peroxisome biosynthesis. The sequence is that of Peroxisomal biogenesis factor 3 (PEX3) from Debaryomyces hansenii (strain ATCC 36239 / CBS 767 / BCRC 21394 / JCM 1990 / NBRC 0083 / IGC 2968) (Yeast).